A 318-amino-acid polypeptide reads, in one-letter code: Basic leucine zipper (bZIP) transcription factor atfB (318 aa).

A disordered region spans residues 114-157 (FNSSPPEYAPPKHRSSLSEQSQTDGYGVSTRRRKASAIDQCEQQ). The interval 160-199 (REKREKFLERNRLAASKCRQKKKEHTKLLETRFREVSNKK) is basic motif. One can recognise a bZIP domain in the interval 160-223 (REKREKFLER…LNLKNEMLRH (64 aa)). The leucine-zipper stretch occupies residues 202–216 (LESEIEHLRSEVLNL). Residues 275 to 301 (DGPMQLPSEMGSPLDQRRDSEQSIMTE) are disordered.

The protein belongs to the bZIP family. ATF subfamily.

It is found in the nucleus. Functionally, transcription factor that acts as a key player in the regulatory circuit that integrates secondary metabolism and cellular response to oxidative stress. Regulates the genes involved in development and stress response through direct binding to their promoters. Particularly involved in the resistance to oxidative stress in asexual conidiospores. This Aspergillus oryzae (strain ATCC 42149 / RIB 40) (Yellow koji mold) protein is Basic leucine zipper (bZIP) transcription factor atfB.